Consider the following 132-residue polypeptide: Pro-MCH 1 (132 aa).

The first 24 residues, 1-24 (MRHSVLSISFAVALFLECYTPSTA), serve as a signal peptide directing secretion. Residues Cys-120 and Cys-129 are joined by a disulfide bond.

The protein belongs to the melanin-concentrating hormone family. As to expression, pituitary gland. Produced in neurons of lateral basal hypothalamus which project both to the brain and to the neural lobe of the pituitary gland from where MCH is released.

Its function is as follows. Plays a role in skin pigmentation by antagonizing the action of melanotropin alpha. Induces melanin concentration within the melanophores. May participate in the control of the hypothalamo-pituitary adrenal gland axis by inhibiting the release of ACTH. The sequence is that of Pro-MCH 1 (mch1) from Oncorhynchus mykiss (Rainbow trout).